The chain runs to 597 residues: Elongation factor 4 (597 aa).

The tr-type G domain maps to asparagine 2–lysine 184. Residues aspartate 14–threonine 19 and asparagine 131–aspartate 134 contribute to the GTP site.

Belongs to the TRAFAC class translation factor GTPase superfamily. Classic translation factor GTPase family. LepA subfamily.

It is found in the cell inner membrane. The enzyme catalyses GTP + H2O = GDP + phosphate + H(+). Its function is as follows. Required for accurate and efficient protein synthesis under certain stress conditions. May act as a fidelity factor of the translation reaction, by catalyzing a one-codon backward translocation of tRNAs on improperly translocated ribosomes. Back-translocation proceeds from a post-translocation (POST) complex to a pre-translocation (PRE) complex, thus giving elongation factor G a second chance to translocate the tRNAs correctly. Binds to ribosomes in a GTP-dependent manner. This chain is Elongation factor 4, found in Janthinobacterium sp. (strain Marseille) (Minibacterium massiliensis).